The following is a 455-amino-acid chain: Post-transcriptional regulator MTA (455 aa).

Positions 17–163 (DSVSSSEFDE…QVNCQRQDDD (147 aa)) are disordered. A compositionally biased stretch (acidic residues) spans 23–42 (EFDESRDDETDAPTLEDEQL). A compositionally biased stretch (low complexity) spans 88 to 98 (SPLSRPRSPSP). Short sequence motifs (nuclear localization signal) lie at residues 101–107 (RYGKKIK), 121–130 (KRPRRRPRDR), and 143–152 (RAAPKRATRR). Zn(2+) contacts are provided by cysteine 333, histidine 423, cysteine 427, and cysteine 432. The CHC2-type zinc-finger motif lies at 333-432 (CVFDKQSELA…HHSLCRNSEC (100 aa)).

It belongs to the HHV-1 ICP27 protein family. Homodimer. Homodimerization is required for transactivation. Interacts with host ALYREF. Associates in a complex with RNA, and host export factors NXF1/TAP and ALYREF; these interactions allow nuclear export of viral transcripts. Interacts with protein K-bZIP/K8; this interaction promotes viral gene expression during lytic infection. Interacts with host PABPC1. Interacts with host AGO2 and TNRC6A; these interactions inhibit host P-body formation. Interacts with PRKRA and EIF2AK2/PKR; these interactions inhibit host stress granule formation. Post-translationally, proteolytically cleaved by host caspase-7 (CASP7), leading to its inactivation, thereby preventing expression of viral lytic genes.

The protein resides in the host cytoplasm. It is found in the host nucleus. Post-transcriptional regulator that plays an essential role in the expression of viral lytic genes and productive viral replication. Possesses numerous activities that promote the expression of viral genes including enhancement of RNA stability, promotion of RNA splicing and stimulation of protein translation often via its ability to interact with different cellular cofactors. Stabilizes polyadenylated nuclear (PAN) RNA by cooperative binding to a 9-nt core of the MRE (MTA responsive element) together with host PABPC1. Functions as a viral splicing factor and promotes expression of intron-containing viral lytic genes. Protects viral transcripts from specific nuclear RNA decay pathways by preventing host MTREX recruitment that promotes unwinding and degradation of structured RNA substrates. Plays a role in the inhibition of host P-body formation by altering the scaffolding activity of TNRC6A at the initial stage thereby enhancing virus production. Also inhibits host stress granule formation by blocking autophosphorylation of EIF2AK2/PKR and its subsequent binding to dsRNA. The sequence is that of Post-transcriptional regulator MTA from Human herpesvirus 8 type P (isolate GK18) (HHV-8).